A 156-amino-acid polypeptide reads, in one-letter code: ATP synthase subunit b (156 aa).

The chain crosses the membrane as a helical span at residues 12–32; that stretch reads VAFFIFVLFCMKYVWPPVIAA.

The protein belongs to the ATPase B chain family. As to quaternary structure, F-type ATPases have 2 components, F(1) - the catalytic core - and F(0) - the membrane proton channel. F(1) has five subunits: alpha(3), beta(3), gamma(1), delta(1), epsilon(1). F(0) has three main subunits: a(1), b(2) and c(10-14). The alpha and beta chains form an alternating ring which encloses part of the gamma chain. F(1) is attached to F(0) by a central stalk formed by the gamma and epsilon chains, while a peripheral stalk is formed by the delta and b chains.

Its subcellular location is the cell inner membrane. Functionally, f(1)F(0) ATP synthase produces ATP from ADP in the presence of a proton or sodium gradient. F-type ATPases consist of two structural domains, F(1) containing the extramembraneous catalytic core and F(0) containing the membrane proton channel, linked together by a central stalk and a peripheral stalk. During catalysis, ATP synthesis in the catalytic domain of F(1) is coupled via a rotary mechanism of the central stalk subunits to proton translocation. In terms of biological role, component of the F(0) channel, it forms part of the peripheral stalk, linking F(1) to F(0). The protein is ATP synthase subunit b of Pseudomonas syringae pv. tomato (strain ATCC BAA-871 / DC3000).